The sequence spans 54 residues: Large ribosomal subunit protein bL33 (54 aa).

The protein belongs to the bacterial ribosomal protein bL33 family.

In Opitutus terrae (strain DSM 11246 / JCM 15787 / PB90-1), this protein is Large ribosomal subunit protein bL33.